The following is a 569-amino-acid chain: Endo-1,4-beta-xylanase 5 (569 aa).

The first 25 residues, methionine 1–serine 25, serve as a signal peptide directing secretion. 3 N-linked (GlcNAc...) asparagine glycosylation sites follow: asparagine 197, asparagine 261, and asparagine 307. The 292-residue stretch at glutamate 209–lysine 500 folds into the GH10 domain. Catalysis depends on glutamate 332, which acts as the Proton donor. A glycan (N-linked (GlcNAc...) asparagine) is linked at asparagine 346. Glutamate 439 acts as the Nucleophile in catalysis. N-linked (GlcNAc...) asparagine glycans are attached at residues asparagine 490, asparagine 536, and asparagine 544.

Belongs to the glycosyl hydrolase 10 (cellulase F) family.

The enzyme catalyses Endohydrolysis of (1-&gt;4)-beta-D-xylosidic linkages in xylans.. The protein operates within glycan degradation; xylan degradation. Functionally, binds to and hydrolyzes insoluble and soluble xylan substrates. The polypeptide is Endo-1,4-beta-xylanase 5 (Arabidopsis thaliana (Mouse-ear cress)).